Reading from the N-terminus, the 146-residue chain is Minor capsid protein P5 (146 aa).

As to quaternary structure, interacts with the major capsid protein.

It localises to the virion. One of the minor capsid proteins that constitute a network internal to the major capsid proteins and outside the lipid membrane. The minor capsid proteins glue and stabilize the capsomers. In Paramecium bursaria Chlorella virus 1 (PBCV-1), this protein is Minor capsid protein P5.